Reading from the N-terminus, the 514-residue chain is 2,3-bisphosphoglycerate-independent phosphoglycerate mutase (514 aa).

Residues Asp12 and Ser62 each contribute to the Mn(2+) site. Ser62 functions as the Phosphoserine intermediate in the catalytic mechanism. Substrate is bound by residues His123, 153–154 (RD), Arg185, Arg191, 260–263 (RPDR), and Lys335. Mn(2+) is bound by residues Asp402, His406, Asp443, His444, and His462.

This sequence belongs to the BPG-independent phosphoglycerate mutase family. In terms of assembly, monomer. Mn(2+) serves as cofactor.

The catalysed reaction is (2R)-2-phosphoglycerate = (2R)-3-phosphoglycerate. It functions in the pathway carbohydrate degradation; glycolysis; pyruvate from D-glyceraldehyde 3-phosphate: step 3/5. Functionally, catalyzes the interconversion of 2-phosphoglycerate and 3-phosphoglycerate. The protein is 2,3-bisphosphoglycerate-independent phosphoglycerate mutase of Lachnoclostridium phytofermentans (strain ATCC 700394 / DSM 18823 / ISDg) (Clostridium phytofermentans).